The sequence spans 104 residues: Large ribosomal subunit protein uL24 (104 aa).

It belongs to the universal ribosomal protein uL24 family. In terms of assembly, part of the 50S ribosomal subunit.

Its function is as follows. One of two assembly initiator proteins, it binds directly to the 5'-end of the 23S rRNA, where it nucleates assembly of the 50S subunit. In terms of biological role, one of the proteins that surrounds the polypeptide exit tunnel on the outside of the subunit. This chain is Large ribosomal subunit protein uL24, found in Buchnera aphidicola subsp. Schizaphis graminum (strain Sg).